The sequence spans 208 residues: dTTP/UTP pyrophosphatase (208 aa).

The Proton acceptor role is filled by D79.

It belongs to the Maf family. YhdE subfamily. The cofactor is a divalent metal cation.

It is found in the cytoplasm. The catalysed reaction is dTTP + H2O = dTMP + diphosphate + H(+). The enzyme catalyses UTP + H2O = UMP + diphosphate + H(+). Its function is as follows. Nucleoside triphosphate pyrophosphatase that hydrolyzes dTTP and UTP. May have a dual role in cell division arrest and in preventing the incorporation of modified nucleotides into cellular nucleic acids. This Mesorhizobium japonicum (strain LMG 29417 / CECT 9101 / MAFF 303099) (Mesorhizobium loti (strain MAFF 303099)) protein is dTTP/UTP pyrophosphatase.